The following is a 261-amino-acid chain: Methyl jasmonate esterase 1 (261 aa).

The region spanning phenylalanine 8–alanine 251 is the AB hydrolase-1 domain. Serine 82 serves as the catalytic Acyl-ester intermediate. Residues aspartate 211 and histidine 239 each act as charge relay system in the active site.

This sequence belongs to the AB hydrolase superfamily. Methylesterase family. In terms of assembly, homodimer.

It catalyses the reaction methyl (-)-jasmonate + H2O = jasmonate + methanol + H(+). The enzyme catalyses methyl salicylate + H2O = salicylate + methanol + H(+). It functions in the pathway plant hormone biosynthesis. Its pathway is lipid metabolism; oxylipin biosynthesis. Functionally, methylesterase that catalyzes the hydrolysis of methyl jasmonate (MeJA) into jasmonate (JA). Can also use methyl salicylate (MeSA) as substrate with a lower efficiency. This Vitis vinifera (Grape) protein is Methyl jasmonate esterase 1.